A 158-amino-acid polypeptide reads, in one-letter code: Transcription elongation factor GreA (158 aa).

The protein belongs to the GreA/GreB family.

Its function is as follows. Necessary for efficient RNA polymerase transcription elongation past template-encoded arresting sites. The arresting sites in DNA have the property of trapping a certain fraction of elongating RNA polymerases that pass through, resulting in locked ternary complexes. Cleavage of the nascent transcript by cleavage factors such as GreA or GreB allows the resumption of elongation from the new 3'terminus. GreA releases sequences of 2 to 3 nucleotides. In Acinetobacter baumannii (strain SDF), this protein is Transcription elongation factor GreA.